Consider the following 380-residue polypeptide: MAPNIRKSHPLLKMINNSLIDLPAPSNISAWWNFGSLLAMCLATQILTGLLLAMHYTADTTLAFSSVAHTCRNVQYGWLIRNLHANGASFFFICIFLHIGRGLYYGSYLYKETWNTGVILLLTLMATAFVGYVLPWGQMSFGGATVITNLFSAIPYIGQALVEWAWGGFSVDNPTLTRFFALHFLLPFVIAGITIIHLIFLHESGSNNPLGISSNSDKIPFHPYYSLKDILGLTLMLTPLLTLALFSPNLLGDPENFTPANPLVTPPHIKPEWYFLFAYAILRSIPNKLGGVLALAASVLILLLIPFLHKSKQRTMTFRPLSQTLFWLLVANLLVLTWVGSQPVEHPFIIIGQMASFSYFTILLILFPMTSTLENKMFNH.

Transmembrane regions (helical) follow at residues 34 to 54, 78 to 99, 114 to 134, and 179 to 199; these read FGSL…LLAM, WLIR…FLHI, WNTG…GYVL, and FFAL…IHLI. Residues histidine 84 and histidine 98 each contribute to the heme b site. Histidine 183 and histidine 197 together coordinate heme b. A ubiquinone is bound at residue histidine 202. 4 consecutive transmembrane segments (helical) span residues 227–247, 289–309, 321–341, and 348–368; these read LKDI…ALFS, LGGV…PFLH, LSQT…WVGS, and FIII…ILFP.

The protein belongs to the cytochrome b family. As to quaternary structure, the cytochrome bc1 complex contains 11 subunits: 3 respiratory subunits (MT-CYB, CYC1 and UQCRFS1), 2 core proteins (UQCRC1 and UQCRC2) and 6 low-molecular weight proteins (UQCRH/QCR6, UQCRB/QCR7, UQCRQ/QCR8, UQCR10/QCR9, UQCR11/QCR10 and a cleavage product of UQCRFS1). This cytochrome bc1 complex then forms a dimer. Requires heme b as cofactor.

It is found in the mitochondrion inner membrane. In terms of biological role, component of the ubiquinol-cytochrome c reductase complex (complex III or cytochrome b-c1 complex) that is part of the mitochondrial respiratory chain. The b-c1 complex mediates electron transfer from ubiquinol to cytochrome c. Contributes to the generation of a proton gradient across the mitochondrial membrane that is then used for ATP synthesis. This is Cytochrome b (MT-CYB) from Tragopan temminckii (Temminck's tragopan).